Consider the following 173-residue polypeptide: SKP1-like protein 1 (173 aa).

The interval 115–173 is interaction with the F-box domain of F-box proteins; the sequence is ILAANYLNIKGLLDLTCQTVADMIKGKTPEEIRKTFNIKNDFTPEEEEEIRRENQWAFE.

This sequence belongs to the SKP1 family. As to quaternary structure, part of a SCF (SKP1-CUL1-F-box protein) E3 ubiquitin-protein ligase complex. Interacts directly with MOF (via F-box domain). Interacts with rice black streaked dwarf virus RBSDV protein P7-2. Is able to form the SCF complex together with CUL1 and the viral P7-2 protein. Interacts with D3.

Its subcellular location is the nucleus. It functions in the pathway protein modification; protein ubiquitination. Its function is as follows. Involved in ubiquitination and subsequent proteasomal degradation of target proteins. Together with CUL1, a RING-box and a F-box protein, it forms a SCF E3 ubiquitin ligase complex. The functional specificity of this complex depends on the type of F-box protein. In the SCF complex, it serves as an adapter that links the F-box protein to CUL1. The protein is SKP1-like protein 1 of Oryza sativa subsp. japonica (Rice).